The sequence spans 370 residues: MAFTLEDIVQRFGGEVVGNGSQRVGSLAPLDQAGPDQLAFLANPKYLSQVETTRAGAVLINAEDLARLASRESRNFIVTPNPYAYFARVAQTFIDLAAPKAVPGVHPSATIDPSAQIAASAVIGPHVTVEAGAVIGENVRLDANVVIGRGTRIGADSHLYPNVAVYYGCKLGERVIVHAGAVIGSDGFGFAPDFVGEGDARTGSWVKIPQVGGVSIAADVEIGANTTIDRGAMADTIIEECVKIDNLVQIGHNCKVGAYTVIAGCAGIAGSTTIGRHCMIGGAVGIAGHVTLADYVIVTAKSGVSKSLLKPGMYTSAFPAVNHADWNKSAALLRNIDKLRDRIKALENAAAGRQDGPAANAASSSAGDKA.

Residue histidine 252 is the Proton acceptor of the active site. The tract at residues alanine 350–alanine 370 is disordered. Low complexity predominate over residues alanine 358–alanine 370.

It belongs to the transferase hexapeptide repeat family. LpxD subfamily. As to quaternary structure, homotrimer.

The enzyme catalyses a UDP-3-O-[(3R)-3-hydroxyacyl]-alpha-D-glucosamine + a (3R)-hydroxyacyl-[ACP] = a UDP-2-N,3-O-bis[(3R)-3-hydroxyacyl]-alpha-D-glucosamine + holo-[ACP] + H(+). It functions in the pathway bacterial outer membrane biogenesis; LPS lipid A biosynthesis. Catalyzes the N-acylation of UDP-3-O-acylglucosamine using 3-hydroxyacyl-ACP as the acyl donor. Is involved in the biosynthesis of lipid A, a phosphorylated glycolipid that anchors the lipopolysaccharide to the outer membrane of the cell. This is UDP-3-O-acylglucosamine N-acyltransferase from Paraburkholderia xenovorans (strain LB400).